Here is a 361-residue protein sequence, read N- to C-terminus: Tyrosine--tRNA ligase (361 aa).

L-tyrosine contacts are provided by tyrosine 36, tyrosine 162, glutamine 166, aspartate 169, and glutamine 184. The 'KMSKS' region signature appears at 236–240; that stretch reads KMSKS. Lysine 239 is a binding site for ATP.

It belongs to the class-I aminoacyl-tRNA synthetase family. TyrS type 4 subfamily. As to quaternary structure, homodimer.

It localises to the cytoplasm. It carries out the reaction tRNA(Tyr) + L-tyrosine + ATP = L-tyrosyl-tRNA(Tyr) + AMP + diphosphate + H(+). Catalyzes the attachment of tyrosine to tRNA(Tyr) in a two-step reaction: tyrosine is first activated by ATP to form Tyr-AMP and then transferred to the acceptor end of tRNA(Tyr). This is Tyrosine--tRNA ligase from Saccharolobus islandicus (strain Y.N.15.51 / Yellowstone #2) (Sulfolobus islandicus).